We begin with the raw amino-acid sequence, 595 residues long: NADH-quinone oxidoreductase subunit C/D (595 aa).

An NADH dehydrogenase I subunit C region spans residues 1–186 (MVTDNSKATD…TPYFLNNAKQ (186 aa)). Residues 210 to 595 (DFMFLNLGPN…IDIVMADTDR (386 aa)) form an NADH dehydrogenase I subunit D region.

The protein in the N-terminal section; belongs to the complex I 30 kDa subunit family. In the C-terminal section; belongs to the complex I 49 kDa subunit family. NDH-1 is composed of 13 different subunits. Subunits NuoB, CD, E, F, and G constitute the peripheral sector of the complex.

It localises to the cell inner membrane. It carries out the reaction a quinone + NADH + 5 H(+)(in) = a quinol + NAD(+) + 4 H(+)(out). NDH-1 shuttles electrons from NADH, via FMN and iron-sulfur (Fe-S) centers, to quinones in the respiratory chain. The immediate electron acceptor for the enzyme in this species is believed to be ubiquinone. Couples the redox reaction to proton translocation (for every two electrons transferred, four hydrogen ions are translocated across the cytoplasmic membrane), and thus conserves the redox energy in a proton gradient. This chain is NADH-quinone oxidoreductase subunit C/D, found in Psychrobacter sp. (strain PRwf-1).